The sequence spans 101 residues: Small ribosomal subunit protein uS14 (101 aa).

Belongs to the universal ribosomal protein uS14 family. Part of the 30S ribosomal subunit. Contacts proteins S3 and S10.

Its function is as follows. Binds 16S rRNA, required for the assembly of 30S particles and may also be responsible for determining the conformation of the 16S rRNA at the A site. This Bartonella bacilliformis (strain ATCC 35685 / KC583 / Herrer 020/F12,63) protein is Small ribosomal subunit protein uS14.